We begin with the raw amino-acid sequence, 429 residues long: Enolase (429 aa).

A (2R)-2-phosphoglycerate-binding site is contributed by Gln-167. The active-site Proton donor is the Glu-209. The Mg(2+) site is built by Asp-246, Glu-289, and Asp-316. (2R)-2-phosphoglycerate-binding residues include Lys-341, Arg-370, Ser-371, and Lys-392. The active-site Proton acceptor is Lys-341.

The protein belongs to the enolase family. Component of the RNA degradosome, a multiprotein complex involved in RNA processing and mRNA degradation. It depends on Mg(2+) as a cofactor.

Its subcellular location is the cytoplasm. It is found in the secreted. It localises to the cell surface. The catalysed reaction is (2R)-2-phosphoglycerate = phosphoenolpyruvate + H2O. It participates in carbohydrate degradation; glycolysis; pyruvate from D-glyceraldehyde 3-phosphate: step 4/5. Catalyzes the reversible conversion of 2-phosphoglycerate (2-PG) into phosphoenolpyruvate (PEP). It is essential for the degradation of carbohydrates via glycolysis. This Pseudomonas aeruginosa (strain LESB58) protein is Enolase.